Here is a 515-residue protein sequence, read N- to C-terminus: 2-isopropylmalate synthase (515 aa).

One can recognise a Pyruvate carboxyltransferase domain in the interval 5–267 (VIIFDTTLRD…DTRINTQEIH (263 aa)). The Mn(2+) site is built by aspartate 14, histidine 202, histidine 204, and asparagine 238. A regulatory domain region spans residues 392–515 (VLDKLSAHST…VADIKNHKHH (124 aa)).

Belongs to the alpha-IPM synthase/homocitrate synthase family. LeuA type 1 subfamily. Homodimer. It depends on Mn(2+) as a cofactor.

Its subcellular location is the cytoplasm. It catalyses the reaction 3-methyl-2-oxobutanoate + acetyl-CoA + H2O = (2S)-2-isopropylmalate + CoA + H(+). The protein operates within amino-acid biosynthesis; L-leucine biosynthesis; L-leucine from 3-methyl-2-oxobutanoate: step 1/4. Functionally, catalyzes the condensation of the acetyl group of acetyl-CoA with 3-methyl-2-oxobutanoate (2-ketoisovalerate) to form 3-carboxy-3-hydroxy-4-methylpentanoate (2-isopropylmalate). The polypeptide is 2-isopropylmalate synthase (Haemophilus influenzae (strain PittEE)).